The sequence spans 187 residues: Casparian strip membrane protein 1 (187 aa).

The segment covering 1-10 (MKGSSEHGET) has biased composition (basic and acidic residues). The interval 1-20 (MKGSSEHGETSKQAPLGSSR) is disordered. Residues 1–27 (MKGSSEHGETSKQAPLGSSRGVSKGVS) lie on the Cytoplasmic side of the membrane. A helical membrane pass occupies residues 28 to 48 (VLDLILRFIAIIGTLASAIAM). Residues 49–75 (GTTNETLPFFTQFIRFKAQYSDLPTLT) lie on the Extracellular side of the membrane. An N-linked (GlcNAc...) asparagine glycan is attached at Asn-52. A helical transmembrane segment spans residues 76–96 (FFVVANSIVCAYLTLSLPLSI). Residues 97 to 115 (VHIIRSRAKYSRLLLVVLD) are Cytoplasmic-facing. The chain crosses the membrane as a helical span at residues 116–136 (AAMLALVTPGASAAAAIVYLA). At 137–162 (HKGNVRANWLAICQQFDSFCERISGC) the chain is on the extracellular side. A helical membrane pass occupies residues 163 to 183 (LIGSFGAMVMLVLLLLLSAIA). Residues 184–187 (LARR) are Cytoplasmic-facing.

It belongs to the Casparian strip membrane proteins (CASP) family. In terms of assembly, homodimer and heterodimers.

The protein resides in the cell membrane. Functionally, regulates membrane-cell wall junctions and localized cell wall deposition. Required for establishment of the Casparian strip membrane domain (CSD) and the subsequent formation of Casparian strips, a cell wall modification of the root endodermis that determines an apoplastic barrier between the intraorganismal apoplasm and the extraorganismal apoplasm and prevents lateral diffusion. The polypeptide is Casparian strip membrane protein 1 (Zea mays (Maize)).